The chain runs to 105 residues: Mini zinc finger protein 2 (105 aa).

The disordered stretch occupies residues 1 to 29 (MGPQQDRSAAKPYANGSTAAAAAAGRKEN). The ZF-HD dimerization-type; degenerate zinc-finger motif lies at 35–84 (YRECQRNHAASIGGHAVDGCREFMASGADGTAAALLCAACGCHQSFHRRE).

In terms of assembly, homo- and heterodimers.

It is found in the cytoplasm. Inhibits zinc finger homeodomain (ZHD) transcription factors, by interacting with them to prevent both their nuclear localization and their DNA-binding properties. This Oryza sativa subsp. indica (Rice) protein is Mini zinc finger protein 2 (MIF2).